The sequence spans 308 residues: UDP-N-acetylenolpyruvoylglucosamine reductase (308 aa).

One can recognise an FAD-binding PCMH-type domain in the interval 22–185 (RVGGPADWLF…TEATFRAEAG (164 aa)). Arg165 is an active-site residue. Basic and acidic residues predominate over residues 197 to 211 (QIARRDSSQPTKERS). Residues 197–228 (QIARRDSSQPTKERSAGSTFRNPAGFSSTGRA) form a disordered region. The span at 212-226 (AGSTFRNPAGFSSTG) shows a compositional bias: polar residues. Residue Ser214 is the Proton donor of the active site. The active site involves Glu296.

The protein belongs to the MurB family. FAD is required as a cofactor.

The protein localises to the cytoplasm. It catalyses the reaction UDP-N-acetyl-alpha-D-muramate + NADP(+) = UDP-N-acetyl-3-O-(1-carboxyvinyl)-alpha-D-glucosamine + NADPH + H(+). It functions in the pathway cell wall biogenesis; peptidoglycan biosynthesis. Functionally, cell wall formation. The sequence is that of UDP-N-acetylenolpyruvoylglucosamine reductase from Cereibacter sphaeroides (strain ATCC 17029 / ATH 2.4.9) (Rhodobacter sphaeroides).